The following is a 508-amino-acid chain: Transcriptional regulatory protein moc3 (508 aa).

A disordered region spans residues 15 to 43 (NRTGSINSNPLYIPNPNVEPTPKPTKRRT). Residues 46–76 (GCLTCRRRRIKCDETKPFCLNCTKTNRECEG) constitute a DNA-binding region (zn(2)-C6 fungal-type). Disordered regions lie at residues 110 to 146 (ASSS…STVT) and 174 to 193 (NHNV…KPSV). The segment covering 176 to 193 (NVPTNNSSSATSSTKPSV) has biased composition (low complexity).

As to quaternary structure, interacts with zfs1.

It is found in the nucleus. In terms of biological role, induces sexual development and ascus formation. Also involved in calcium homeostasis. The polypeptide is Transcriptional regulatory protein moc3 (moc3) (Schizosaccharomyces pombe (strain 972 / ATCC 24843) (Fission yeast)).